We begin with the raw amino-acid sequence, 847 residues long: Glucans biosynthesis glucosyltransferase H (847 aa).

The Cytoplasmic portion of the chain corresponds to 1–138 (MNKTTEYIDA…KWRTVGTIRR (138 aa)). Residues 139-156 (YILLILTLAQTVVATWYM) traverse the membrane as a helical segment. The Periplasmic portion of the chain corresponds to 157–193 (KTILPYQGWALINPMDMVGQDIWVSFMQLLPYMLQTG). The chain crosses the membrane as a helical span at residues 194 to 216 (ILILFAVLFCWVSAGFWTALMGF). Residues 217–511 (LQLLIGRDKY…LVKGMHPVHR (295 aa)) are Cytoplasmic-facing. A helical transmembrane segment spans residues 512 to 534 (AVFLTGVMSYLSAPLWFMFLALS). Residues 535–567 (TALQVVHALTEPQYFLQPRQLFPVWPQWRPELA) lie on the Periplasmic side of the membrane. The helical transmembrane segment at 568-590 (IALFASTMVLLFLPKLLSIMLIW) threads the bilayer. Topologically, residues 591–602 (CKGTKEYGGFWR) are cytoplasmic. The chain crosses the membrane as a helical span at residues 603–625 (VTLSLLLEVLFSVLLAPVRMLFH). Topologically, residues 626 to 679 (TVFVVSAFLGWEVVWNSPQRDDDSTPWGEAFMRHGSQLLLGLVWAVGMAWLDLR) are periplasmic. The chain crosses the membrane as a helical span at residues 680–702 (FLFWLAPIVFSLILSPFVSVISS). Residues 703 to 847 (RSTVGLRTKR…ALQGRTSSAR (145 aa)) lie on the Cytoplasmic side of the membrane.

It belongs to the glycosyltransferase 2 family. OpgH subfamily.

The protein resides in the cell inner membrane. Its pathway is glycan metabolism; osmoregulated periplasmic glucan (OPG) biosynthesis. Functionally, involved in the biosynthesis of osmoregulated periplasmic glucans (OPGs). This Salmonella typhimurium (strain LT2 / SGSC1412 / ATCC 700720) protein is Glucans biosynthesis glucosyltransferase H.